The following is a 513-amino-acid chain: GMP synthase [glutamine-hydrolyzing] (513 aa).

The region spanning Leu7 to Asp198 is the Glutamine amidotransferase type-1 domain. The active-site Nucleophile is Cys84. Catalysis depends on residues His172 and Glu174. Residues Trp199 to Arg388 form the GMPS ATP-PPase domain. Ser226–Ser232 provides a ligand contact to ATP.

As to quaternary structure, homodimer.

It carries out the reaction XMP + L-glutamine + ATP + H2O = GMP + L-glutamate + AMP + diphosphate + 2 H(+). Its pathway is purine metabolism; GMP biosynthesis; GMP from XMP (L-Gln route): step 1/1. Catalyzes the synthesis of GMP from XMP. In Symbiobacterium thermophilum (strain DSM 24528 / JCM 14929 / IAM 14863 / T), this protein is GMP synthase [glutamine-hydrolyzing].